The chain runs to 279 residues: MSRTNFDTLLEAGCHFGHLKRKWNPSMAPYIFMERNGIHIIDLHKTVAKVDEAADALKQIAKSGKKVLFVATKKQAKQVVAEKAASVNMPYVIERWPGGMLTNFPTIRKAVKKMATIDKLTNDGTYSNLSKREVLQISRQRAKLEKNLGSIADLTRLPSALFVIDVLKENIAVREANRLGIPVFAIVDTNSDPSNVDFVIPANDDATKSVEVILDACCGAIAEGLEERKAEKVDMEAAGENAPKGAGKKKNTKARMDKAEEEAINAAKAAAFLKEDEEA.

A disordered region spans residues lysine 232 to glutamate 260.

It belongs to the universal ribosomal protein uS2 family.

This is Small ribosomal subunit protein uS2 from Phocaeicola vulgatus (strain ATCC 8482 / DSM 1447 / JCM 5826 / CCUG 4940 / NBRC 14291 / NCTC 11154) (Bacteroides vulgatus).